Consider the following 261-residue polypeptide: Proline-rich protein HaeIII subfamily 1 (261 aa).

Positions 1-15 are cleaved as a signal peptide; sequence MLVVLFTVALLALSS. Residues 15–261 form a disordered region; that stretch reads SAQGPREENQ…PPQGRPQGPR (247 aa). 2 stretches are compositionally biased toward pro residues: residues 32-44 and 51-237; these read QRPP…PRPP and GPPP…PPTG. Over residues 238-261 the composition is skewed to low complexity; the sequence is GPQQTPPLAGNTQGPPQGRPQGPR.

Its subcellular location is the secreted. In Mus musculus (Mouse), this protein is Proline-rich protein HaeIII subfamily 1 (Prh1).